A 940-amino-acid polypeptide reads, in one-letter code: Gamma-aminobutyric acid type B receptor subunit 2 (940 aa).

The signal sequence occupies residues 1–40 (MASPPSSGQPRPPPPPPPPARLLLPLLLSLLLSLAPGAWG). The Extracellular segment spans residues 41-482 (WARGAPRPPP…LRKISLPLYS (442 aa)). N89 is a glycosylation site (N-linked (GlcNAc...) asparagine). Disulfide bonds link C107-C134, C236-C265, and C264-C301. N-linked (GlcNAc...) asparagine glycosylation is found at N297, N388, N403, and N452. Residues 483–503 (ILSALTILGMIMASAFLFFNI) form a helical membrane-spanning segment. The Cytoplasmic segment spans residues 504 to 521 (KNRNQKLIKMSSPYMNNL). The helical transmembrane segment at 522 to 542 (IILGGMLSYASIFLFGLDGSF) threads the bilayer. Residues 543–550 (VSEKTFET) lie on the Extracellular side of the membrane. A helical membrane pass occupies residues 551 to 571 (LCTVRTWILTVGYTTAFGAMF). At 572–596 (AKTWRVHAIFKNVKMKKKIIKDQKL) the chain is on the cytoplasmic side. A helical transmembrane segment spans residues 597-617 (LVIVGGMLLIDLCILICWQAV). Residues 618-653 (DPLRRTVERYSMEPDPAGRDISIRPLLEHCENTHMT) are Extracellular-facing. A helical membrane pass occupies residues 654 to 674 (IWLGIVYAYKGLLMLFGCFLA). Residues 675–690 (WETRNVSIPALNDSKY) are Cytoplasmic-facing. Residues 691 to 711 (IGMSVYNVGIMCIIGAAVSFL) traverse the membrane as a helical segment. The Extracellular segment spans residues 712-719 (TRDQPNVQ). The chain crosses the membrane as a helical span at residues 720 to 740 (FCIVALVIIFCSTITLCLVFV). At 741–940 (PKLITLRTNP…PSFRVMVSGL (200 aa)) the chain is on the cytoplasmic side. Residues 762–789 (TQNQKKEDSKTSTSVTSVNQASTSRLEG) form a disordered region. Positions 772 to 786 (TSTSVTSVNQASTSR) are enriched in polar residues. S775 and S778 each carry phosphoserine. A coiled-coil region spans residues 781–818 (QASTSRLEGLQSENHRLRMKITELDKDLEEVTMQLQDT). T818 bears the Phosphothreonine mark. S883, S892, S912, S915, S919, and S923 each carry phosphoserine.

Belongs to the G-protein coupled receptor 3 family. GABA-B receptor subfamily. As to quaternary structure, heterodimer of GABBR1 and GABBR2. Homodimers may form, but are inactive. Interacts (via C-terminus) with ATF4 (via leucine zipper domain).

It localises to the cell membrane. Its subcellular location is the postsynaptic cell membrane. Component of a heterodimeric G-protein coupled receptor for GABA, formed by GABBR1 and GABBR2. Within the heterodimeric GABA receptor, only GABBR1 seems to bind agonists, while GABBR2 mediates coupling to G proteins. Ligand binding causes a conformation change that triggers signaling via guanine nucleotide-binding proteins (G proteins) and modulates the activity of down-stream effectors, such as adenylate cyclase. Signaling inhibits adenylate cyclase, stimulates phospholipase A2, activates potassium channels, inactivates voltage-dependent calcium-channels and modulates inositol phospholipid hydrolysis. Plays a critical role in the fine-tuning of inhibitory synaptic transmission. Pre-synaptic GABA receptor inhibits neurotransmitter release by down-regulating high-voltage activated calcium channels, whereas postsynaptic GABA receptor decreases neuronal excitability by activating a prominent inwardly rectifying potassium (Kir) conductance that underlies the late inhibitory postsynaptic potentials. Not only implicated in synaptic inhibition but also in hippocampal long-term potentiation, slow wave sleep, muscle relaxation and antinociception. Interacts with KCTD8, KCTD12 and KCTD16; this interaction determines the pharmacology and kinetics of the receptor response, the KCTD proteins markedly accelerating the GABA-B response, although to different extents. The chain is Gamma-aminobutyric acid type B receptor subunit 2 (Gabbr2) from Mus musculus (Mouse).